Consider the following 458-residue polypeptide: Type III intermediate filament (458 aa).

Residues methionine 1–glutamate 100 are head. Residues glutamate 97 to isoleucine 405 enclose the IF rod domain. Residues serine 406 to aspartate 458 are tail.

The protein belongs to the intermediate filament family.

The chain is Type III intermediate filament from Tetronarce californica (Pacific electric ray).